We begin with the raw amino-acid sequence, 34 residues long: Photosystem I reaction center subunit XII (34 aa).

Residues 11–31 traverse the membrane as a helical segment; that stretch reads VAIAFVVALIAGIAALLLSTA.

It belongs to the PsaM family. In terms of assembly, the G.violaceus PSI reaction center is composed of one copy each of PsaA,B,C,D,E,F,L,M and Z, and forms trimeric complexes.

It is found in the cell inner membrane. This chain is Photosystem I reaction center subunit XII, found in Gloeobacter violaceus (strain ATCC 29082 / PCC 7421).